The following is a 154-amino-acid chain: Ribonuclease 8 (154 aa).

An N-terminal signal peptide occupies residues 1–27 (MAPARAGCCALLLLLLGLWVAEIPVSA). Catalysis depends on H42, which acts as the Proton acceptor. 3 disulfides stabilise this stretch: C64-C118, C82-C133, and C89-C96. Residues 65–69 (KDLNT) and K90 each bind substrate. H149 functions as the Proton donor in the catalytic mechanism.

It belongs to the pancreatic ribonuclease family.

The protein localises to the secreted. In terms of biological role, has a low ribonuclease activity. The protein is Ribonuclease 8 (RNASE8) of Pongo pygmaeus (Bornean orangutan).